Consider the following 417-residue polypeptide: Glutamyl-tRNA reductase (417 aa).

Substrate contacts are provided by residues 49–52 (TCNR), Ser-107, 112–114 (EEQ), and Gln-118. Cys-50 (nucleophile) is an active-site residue. Residue 187–192 (GTGEVS) coordinates NADP(+).

Belongs to the glutamyl-tRNA reductase family. Homodimer.

It carries out the reaction (S)-4-amino-5-oxopentanoate + tRNA(Glu) + NADP(+) = L-glutamyl-tRNA(Glu) + NADPH + H(+). The protein operates within porphyrin-containing compound metabolism; protoporphyrin-IX biosynthesis; 5-aminolevulinate from L-glutamyl-tRNA(Glu): step 1/2. Its function is as follows. Catalyzes the NADPH-dependent reduction of glutamyl-tRNA(Glu) to glutamate 1-semialdehyde (GSA). The chain is Glutamyl-tRNA reductase from Cenarchaeum symbiosum (strain A).